Reading from the N-terminus, the 343-residue chain is Fructose-1,6-bisphosphatase class 1 (343 aa).

Residues Glu91, Asp113, Ile115, and Asp116 each contribute to the Mg(2+) site. Residues 116-119, Asn210, and Lys276 contribute to the substrate site; that span reads DGSS. Glu282 is a Mg(2+) binding site.

The protein belongs to the FBPase class 1 family. In terms of assembly, homotetramer. Mg(2+) serves as cofactor.

Its subcellular location is the cytoplasm. The enzyme catalyses beta-D-fructose 1,6-bisphosphate + H2O = beta-D-fructose 6-phosphate + phosphate. It functions in the pathway carbohydrate biosynthesis; gluconeogenesis. The chain is Fructose-1,6-bisphosphatase class 1 from Parvibaculum lavamentivorans (strain DS-1 / DSM 13023 / NCIMB 13966).